We begin with the raw amino-acid sequence, 802 residues long: Oleate activated transcription factor 3 (802 aa).

Positions 19-47 (CTNCKKRKSKCDRGKPCSNCTRIGIENSC) form a DNA-binding region, zn(2)-C6 fungal-type. Positions 749–768 (TSQQDSLASAGTNRTNNIAT) are enriched in polar residues. The interval 749-779 (TSQQDSLASAGTNRTNNIATNSGSGDDGGNG) is disordered.

Belongs to the OAF3 family.

It localises to the cytoplasm. The protein resides in the nucleus. It is found in the mitochondrion. Functionally, transcriptional inhibitor with a significantly increased number of target genes in response to oleate. The polypeptide is Oleate activated transcription factor 3 (OAF3) (Vanderwaltozyma polyspora (strain ATCC 22028 / DSM 70294 / BCRC 21397 / CBS 2163 / NBRC 10782 / NRRL Y-8283 / UCD 57-17) (Kluyveromyces polysporus)).